A 329-amino-acid chain; its full sequence is MICNERMVIYRGAGQRVAALEDFCPHRGAPLSLGSIQDGKLVCGYHGLVMDCDGRTASMPAQRVQAFPCIRAFPAQERHGFIWVWPGDAALADPALIPHLEWAENPAWAYGGGLYHIACDYRLMIDNLMDLTHETYVHASSIGQKEIDEAPVSTRVEGDRLITGRFMEGILAPPFWRAALRGNGLADDVPVDRWQICRFTPPSHVLIEVGVAHAGRGGYDAPADCKASSIVVDFITPETDTSIWYFWGMARSFRPEDNELTARIREGQGTIFAEDLEMLEQQQRNLLAWPERPLLKLNIDAGGVQSRRIIERLVSAERAAEAQLIGRQA.

Residues 1 to 84 enclose the Rieske domain; it reads MICNERMVIY…AQERHGFIWV (84 aa). Residues Cys24, His26, Cys43, and His46 each contribute to the [2Fe-2S] cluster site.

This sequence belongs to the bacterial ring-hydroxylating dioxygenase alpha subunit family. This demethylase system consists of two proteins: an oxygenase and an oxygenase reductase. [2Fe-2S] cluster serves as cofactor. The cofactor is Fe cation.

It carries out the reaction vanillate + NADH + O2 + H(+) = 3,4-dihydroxybenzoate + formaldehyde + NAD(+) + H2O. It participates in xenobiotic degradation; vanillyl-alcohol degradation. The chain is Vanillate O-demethylase oxygenase subunit (vanA) from Pseudomonas sp. (strain ATCC 19151).